Consider the following 425-residue polypeptide: Dihydroorotase (425 aa).

2 residues coordinate Zn(2+): H59 and H61. Residues 61 to 63 and N93 each bind substrate; that span reads HLR. The Zn(2+) site is built by D151, H178, and H231. N277 is a binding site for substrate. D304 provides a ligand contact to Zn(2+). Residue D304 is part of the active site. Residues H308 and 322-323 each bind substrate; that span reads FG.

It belongs to the metallo-dependent hydrolases superfamily. DHOase family. Class I DHOase subfamily. Zn(2+) is required as a cofactor.

The catalysed reaction is (S)-dihydroorotate + H2O = N-carbamoyl-L-aspartate + H(+). It functions in the pathway pyrimidine metabolism; UMP biosynthesis via de novo pathway; (S)-dihydroorotate from bicarbonate: step 3/3. Functionally, catalyzes the reversible cyclization of carbamoyl aspartate to dihydroorotate. The sequence is that of Dihydroorotase from Staphylococcus epidermidis (strain ATCC 35984 / DSM 28319 / BCRC 17069 / CCUG 31568 / BM 3577 / RP62A).